A 921-amino-acid polypeptide reads, in one-letter code: Isoleucine--tRNA ligase (921 aa).

Positions 57–67 match the 'HIGH' region motif; that stretch reads PYANGDIHMGH. Glu-552 contacts L-isoleucyl-5'-AMP. Positions 593 to 597 match the 'KMSKS' region motif; that stretch reads KMSKS. Lys-596 provides a ligand contact to ATP. The Zn(2+) site is built by Cys-888, Cys-891, Cys-908, and Cys-911.

This sequence belongs to the class-I aminoacyl-tRNA synthetase family. IleS type 1 subfamily. Monomer. It depends on Zn(2+) as a cofactor.

Its subcellular location is the cytoplasm. The catalysed reaction is tRNA(Ile) + L-isoleucine + ATP = L-isoleucyl-tRNA(Ile) + AMP + diphosphate. Functionally, catalyzes the attachment of isoleucine to tRNA(Ile). As IleRS can inadvertently accommodate and process structurally similar amino acids such as valine, to avoid such errors it has two additional distinct tRNA(Ile)-dependent editing activities. One activity is designated as 'pretransfer' editing and involves the hydrolysis of activated Val-AMP. The other activity is designated 'posttransfer' editing and involves deacylation of mischarged Val-tRNA(Ile). This Bacillus cereus (strain 03BB102) protein is Isoleucine--tRNA ligase.